We begin with the raw amino-acid sequence, 184 residues long: Large ribosomal subunit protein uL6 (184 aa).

It belongs to the universal ribosomal protein uL6 family. As to quaternary structure, part of the 50S ribosomal subunit.

Functionally, this protein binds to the 23S rRNA, and is important in its secondary structure. It is located near the subunit interface in the base of the L7/L12 stalk, and near the tRNA binding site of the peptidyltransferase center. This is Large ribosomal subunit protein uL6 from Amoebophilus asiaticus (strain 5a2).